A 113-amino-acid chain; its full sequence is Putative pterin-4-alpha-carbinolamine dehydratase (113 aa).

The protein belongs to the pterin-4-alpha-carbinolamine dehydratase family.

The enzyme catalyses (4aS,6R)-4a-hydroxy-L-erythro-5,6,7,8-tetrahydrobiopterin = (6R)-L-erythro-6,7-dihydrobiopterin + H2O. The chain is Putative pterin-4-alpha-carbinolamine dehydratase from Saccharophagus degradans (strain 2-40 / ATCC 43961 / DSM 17024).